Consider the following 54-residue polypeptide: Large ribosomal subunit protein bL33B (54 aa).

It belongs to the bacterial ribosomal protein bL33 family.

The polypeptide is Large ribosomal subunit protein bL33B (rpmG2) (Streptomyces coelicolor (strain ATCC BAA-471 / A3(2) / M145)).